The sequence spans 168 residues: 2-C-methyl-D-erythritol 2,4-cyclodiphosphate synthase (168 aa).

Asp-13 and His-15 together coordinate a divalent metal cation. Residues 13–15 and 39–40 each bind 4-CDP-2-C-methyl-D-erythritol 2-phosphate; these read DVH and HS. His-47 contacts a divalent metal cation. 4-CDP-2-C-methyl-D-erythritol 2-phosphate contacts are provided by residues 61–63, 66–70, Phe-144, and Lys-147; these read DIG and FPDTD.

It belongs to the IspF family. In terms of assembly, homotrimer. A divalent metal cation is required as a cofactor.

The enzyme catalyses 4-CDP-2-C-methyl-D-erythritol 2-phosphate = 2-C-methyl-D-erythritol 2,4-cyclic diphosphate + CMP. It participates in isoprenoid biosynthesis; isopentenyl diphosphate biosynthesis via DXP pathway; isopentenyl diphosphate from 1-deoxy-D-xylulose 5-phosphate: step 4/6. Its function is as follows. Involved in the biosynthesis of isopentenyl diphosphate (IPP) and dimethylallyl diphosphate (DMAPP), two major building blocks of isoprenoid compounds. Catalyzes the conversion of 4-diphosphocytidyl-2-C-methyl-D-erythritol 2-phosphate (CDP-ME2P) to 2-C-methyl-D-erythritol 2,4-cyclodiphosphate (ME-CPP) with a corresponding release of cytidine 5-monophosphate (CMP). The polypeptide is 2-C-methyl-D-erythritol 2,4-cyclodiphosphate synthase (Ralstonia pickettii (strain 12J)).